Reading from the N-terminus, the 195-residue chain is Protein GrpE (195 aa).

The segment covering 1–20 (MSSKEQKTPDEQVLDQKEAA) has biased composition (basic and acidic residues). The interval 1-40 (MSSKEQKTPDEQVLDQKEAAKGQQADAAPETADVADPRDE) is disordered.

It belongs to the GrpE family. Homodimer.

The protein localises to the cytoplasm. Functionally, participates actively in the response to hyperosmotic and heat shock by preventing the aggregation of stress-denatured proteins, in association with DnaK and GrpE. It is the nucleotide exchange factor for DnaK and may function as a thermosensor. Unfolded proteins bind initially to DnaJ; upon interaction with the DnaJ-bound protein, DnaK hydrolyzes its bound ATP, resulting in the formation of a stable complex. GrpE releases ADP from DnaK; ATP binding to DnaK triggers the release of the substrate protein, thus completing the reaction cycle. Several rounds of ATP-dependent interactions between DnaJ, DnaK and GrpE are required for fully efficient folding. This Pectobacterium atrosepticum (strain SCRI 1043 / ATCC BAA-672) (Erwinia carotovora subsp. atroseptica) protein is Protein GrpE.